The following is a 257-amino-acid chain: Thioredoxin-dependent peroxide reductase, mitochondrial (257 aa).

A mitochondrion-targeting transit peptide spans 1–62 (MAATAGRLFR…FAFSTSSSYH (62 aa)). The region spanning 64-222 (PAVTQHAPYF…TLRLVKAFQF (159 aa)) is the Thioredoxin domain. Lys84 carries the N6-succinyllysine modification. Residue Lys92 is modified to N6-acetyllysine; alternate. Lys92 is subject to N6-succinyllysine; alternate. Cys109 (cysteine sulfenic acid (-SOH) intermediate) is an active-site residue. Thr147 carries the phosphothreonine modification.

This sequence belongs to the peroxiredoxin family. AhpC/Prx1 subfamily. In terms of assembly, homodimer; disulfide-linked, upon oxidation. 6 homodimers assemble to form a ring-like dodecamer. Interacts with NEK6. Interacts with LRRK2. Interacts with MAP3K13. Interacts with RPS6KC1 (via PX domain). Post-translationally, phosphorylated by LRRK2; phosphorylation reduces perodixase activity. The enzyme can be inactivated by further oxidation of the cysteine sulfenic acid (C(P)-SOH) to sulphinic acid (C(P)-SO2H) and sulphonic acid (C(P)-SO3H) instead of its condensation to a disulfide bond. In terms of processing, S-palmitoylated. As to expression, predominantly expressed in adrenal cortex. Also detected in liver, renal cortex and medulla, and adrenal medulla (at protein level).

It is found in the mitochondrion matrix. The protein resides in the cytoplasm. The protein localises to the early endosome. It catalyses the reaction a hydroperoxide + [thioredoxin]-dithiol = an alcohol + [thioredoxin]-disulfide + H2O. Its function is as follows. Thiol-specific peroxidase that catalyzes the reduction of hydrogen peroxide and organic hydroperoxides to water and alcohols, respectively. Plays a role in cell protection against oxidative stress by detoxifying peroxides. Acts synergistically with MAP3K13 to regulate the activation of NF-kappa-B in the cytosol. Required for the maintenance of physical strength. The polypeptide is Thioredoxin-dependent peroxide reductase, mitochondrial (PRDX3) (Bos taurus (Bovine)).